The chain runs to 357 residues: Non-structural protein NS2 (357 aa).

Disordered stretches follow at residues 163–199 (NERE…AREM) and 228–267 (LDEK…PKTH). 2 stretches are compositionally biased toward acidic residues: residues 230 to 241 (EKDEEDGDERED) and 250 to 260 (DDDEQGEDASD).

This sequence belongs to the orbivirus non-structural protein NS2 family.

Single-stranded RNA-binding protein. In Antilocapra americana (Pronghorn), this protein is Non-structural protein NS2 (Segment-8).